Here is a 179-residue protein sequence, read N- to C-terminus: Ribosome-recycling factor (179 aa).

This sequence belongs to the RRF family.

It is found in the cytoplasm. Responsible for the release of ribosomes from messenger RNA at the termination of protein biosynthesis. May increase the efficiency of translation by recycling ribosomes from one round of translation to another. This chain is Ribosome-recycling factor, found in Chlamydia trachomatis serovar D (strain ATCC VR-885 / DSM 19411 / UW-3/Cx).